The sequence spans 496 residues: Aspartic proteinase (496 aa).

Positions 1-24 are cleaved as a signal peptide; sequence MAKRHLLLVTTCLWALSCALLLHA. Residues 25–59 constitute a propeptide, activation peptide; that stretch reads SSDGFLRVNLNKKRLDKEDLTAAKLAQQGNRLLKT. Residues 77 to 493 form the Peptidase A1 domain; the sequence is YYGVIGLGSP…DFGKDRIGFA (417 aa). Residue Asp-95 is part of the active site. Disulfide bonds link Cys-108/Cys-114 and Cys-273/Cys-277. Asp-282 is an active-site residue. A Saposin B-type domain is found at 307 to 407; the sequence is IISTECKEVV…NQLCERLPSP (101 aa). 4 disulfides stabilise this stretch: Cys-312–Cys-401, Cys-337–Cys-373, Cys-343–Cys-370, and Cys-415–Cys-452. A glycan (N-linked (GlcNAc...) asparagine) is linked at Asn-387.

The protein belongs to the peptidase A1 family.

Its subcellular location is the vacuole. In terms of biological role, involved in the breakdown of propeptides of storage proteins in protein-storage vacuoles. The protein is Aspartic proteinase (RAP) of Oryza sativa subsp. japonica (Rice).